Here is a 191-residue protein sequence, read N- to C-terminus: FAD-linked sulfhydryl oxidase ERV1 (191 aa).

Residues 72–172 (GPVTKEDLGR…FPCERVDARW (101 aa)) enclose the ERV/ALR sulfhydryl oxidase domain. K76, R81, W84, E121, H125, C148, H151, N152, N155, K160, and R171 together coordinate FAD. C119 and C122 are joined by a disulfide. An intrachain disulfide couples C148 to C165. An intrachain disulfide couples C177 to C182. The Required for dimerization and substrate specificity motif lies at 177–182 (CEQKSC).

In terms of assembly, homodimer. FAD serves as cofactor. In terms of processing, contains three disulfide bonds; one catalytic disulfide (Cys-119 to Cys-122), one structural disulfide (Cys-148 to Cys-165), and one shuttle disulfide (Cys-177 to Cys-182).

The protein localises to the mitochondrion. The enzyme catalyses 2 R'C(R)SH + O2 = R'C(R)S-S(R)CR' + H2O2. FAD-dependent sulfhydryl oxidase that catalyzes disulfide bond formation. Oxidizes thioredoxin in vitro. Required for the import and folding of small cysteine-containing proteins in the mitochondrial intermembrane space, and can act independently of the oxidoreductase MIA40. Can oxidize the cytochrome c oxidase assembly protein COX19, a typical substrate of MIA40. The sequence is that of FAD-linked sulfhydryl oxidase ERV1 (ERV1) from Arabidopsis thaliana (Mouse-ear cress).